We begin with the raw amino-acid sequence, 209 residues long: RNA chaperone ProQ (209 aa).

The interval 105 to 148 (ESQDKAKAKRAALAPKPAAKKAPKKVAVPQRAKTERPAKPAPKA) is disordered.

It belongs to the ProQ family.

It is found in the cytoplasm. In terms of biological role, RNA chaperone with significant RNA binding, RNA strand exchange and RNA duplexing activities. In Shewanella baltica (strain OS223), this protein is RNA chaperone ProQ.